The following is a 389-amino-acid chain: DNA damage checkpoint control protein RAD17 (389 aa).

The segment at 358-389 (LAPPSAFPAEETQDPDESYHPAPSNTDIPLFL) is disordered. The segment covering 380 to 389 (PSNTDIPLFL) has biased composition (polar residues).

It belongs to the rad1 family. Component of the checkpoint clamp complex composed of DDC1, MEC3 and RAD17.

It is found in the nucleus. Component of the checkpoint clamp complex involved in the surveillance mechanism that allows the DNA repair pathways to act to restore the integrity of the DNA prior to DNA synthesis or separation of the replicated chromosomes. The sequence is that of DNA damage checkpoint control protein RAD17 (RAD17) from Eremothecium gossypii (strain ATCC 10895 / CBS 109.51 / FGSC 9923 / NRRL Y-1056) (Yeast).